A 465-amino-acid polypeptide reads, in one-letter code: WAS protein family homolog 2 (465 aa).

The required for WASH complex assembly stretch occupies residues 1 to 54 (MTPVRMQHSLAGQTYAVPLIQPDLRREEAVQQMADALQYLQKVSGDIFSRISQQ). Positions 1-167 (MTPVRMQHSL…EGLGGLPSNI (167 aa)) are WHD1. Residue lysine 220 forms a Glycyl lysine isopeptide (Lys-Gly) (interchain with G-Cter in ubiquitin) linkage. 2 disordered regions span residues 297–407 (QDGV…QGGH) and 422–465 (GISG…DWES). Residues 302-314 (TPPPPPPPPPPAP) are compositionally biased toward pro residues. Residues 349 to 465 (QGAPREVVDP…AEEDEDDWES (117 aa)) are VCA. The region spanning 361 to 383 (GRATLLESIRQAGGIGKAKLRSM) is the WH2 domain. The span at 382 to 398 (SMKERKLEKKKQKEQEQ) shows a compositional bias: basic and acidic residues. Over residues 424–436 (SGKGPGAGEGPGG) the composition is skewed to gly residues. The segment covering 456-465 (AEEDEDDWES) has biased composition (acidic residues).

It belongs to the WASH1 family. In terms of assembly, component of the WASH core complex also described as WASH regulatory complex (SHRC) composed of WASH (WASHC1, WASH2P or WASH3P), WASHC2 (WASHC2A or WASHC2C), WASHC3, WASHC4 and WASHC5. The WASH core complex associates with the F-actin-capping protein dimer (formed by CAPZA1, CAPZA2 or CAPZA3 and CAPZB) in a transient or substoichiometric manner which was initially described as WASH complex. Interacts (via WHD1 region) with WASHC2C; the interaction is direct. Interacts with alpha-tubulin. Interacts with BECN1; WASHC1 and AMBRA1 can competitively interact with BECN1. Interacts with BLOC1S2; may associate with the BLOC-1 complex. Interacts with tubulin gamma chain (TUBG1 or TUBG2). Interacts with EXOC1, EXOC4, EXOC8; in MMP14-positive endosomes in breast tumor cells; indicative for an association with the exocyst complex.

Its subcellular location is the early endosome membrane. The protein resides in the recycling endosome membrane. It is found in the late endosome. It localises to the cytoplasmic vesicle. The protein localises to the autophagosome. Its subcellular location is the cytoplasm. The protein resides in the cytoskeleton. It is found in the microtubule organizing center. It localises to the centrosome. The protein localises to the centriole. Acts as a nucleation-promoting factor at the surface of endosomes, where it recruits and activates the Arp2/3 complex to induce actin polymerization, playing a key role in the fission of tubules that serve as transport intermediates during endosome sorting. Involved in endocytic trafficking of EGF. Involved in transferrin receptor recycling. Regulates the trafficking of endosomal alpha5beta1 integrin to the plasma membrane and involved in invasive cell migration. In T-cells involved in endosome-to-membrane recycling of receptors including T-cell receptor (TCR), CD28 and ITGAL; proposed to be implicated in T-cell proliferation and effector function. In dendritic cells involved in endosome-to-membrane recycling of major histocompatibility complex (MHC) class II probably involving retromer and subsequently allowing antigen sampling, loading and presentation during T-cell activation. Involved in Arp2/3 complex-dependent actin assembly driving Salmonella typhimurium invasion independent of ruffling. Involved in the exocytosis of MMP14 leading to matrix remodeling during invasive migration and implicating late endosome-to-plasma membrane tubular connections and cooperation with the exocyst complex. Involved in negative regulation of autophagy independently from its role in endosomal sorting by inhibiting BECN1 ubiquitination to inactivate PIK3C3/Vps34 activity. In Homo sapiens (Human), this protein is WAS protein family homolog 2 (WASH2P).